Here is a 104-residue protein sequence, read N- to C-terminus: Turripeptide OL55 (104 aa).

In terms of processing, contains 8 disulfide bonds. Expressed by the venom duct.

The protein localises to the secreted. In terms of biological role, acts as a neurotoxin by inhibiting an ion channel. The chain is Turripeptide OL55 from Iotyrris olangoensis (Sea snail).